Consider the following 228-residue polypeptide: Large ribosomal subunit protein bL25 (228 aa).

Residues 196 to 228 (EEAAVAEAQSAESAEGKAEAEAEATNEKNKSEA) form a disordered region. The segment covering 209–228 (AEGKAEAEAEATNEKNKSEA) has biased composition (basic and acidic residues).

It belongs to the bacterial ribosomal protein bL25 family. CTC subfamily. In terms of assembly, part of the 50S ribosomal subunit; part of the 5S rRNA/L5/L18/L25 subcomplex. Contacts the 5S rRNA. Binds to the 5S rRNA independently of L5 and L18.

Functionally, this is one of the proteins that binds to the 5S RNA in the ribosome where it forms part of the central protuberance. The sequence is that of Large ribosomal subunit protein bL25 from Methylorubrum extorquens (strain PA1) (Methylobacterium extorquens).